A 444-amino-acid chain; its full sequence is Homogentisate 1,2-dioxygenase (444 aa).

The active-site Proton acceptor is the H298. The Fe cation site is built by H341 and E347. Homogentisate is bound by residues Y356 and H377. Fe cation is bound at residue H377.

It belongs to the homogentisate dioxygenase family. In terms of assembly, hexamer; dimer of trimers. Fe cation is required as a cofactor.

The enzyme catalyses homogentisate + O2 = 4-maleylacetoacetate + H(+). The protein operates within amino-acid degradation; L-phenylalanine degradation; acetoacetate and fumarate from L-phenylalanine: step 4/6. Functionally, involved in the catabolism of homogentisate (2,5-dihydroxyphenylacetate or 2,5-OH-PhAc), a central intermediate in the degradation of phenylalanine and tyrosine. Catalyzes the oxidative ring cleavage of the aromatic ring of homogentisate to yield maleylacetoacetate. The protein is Homogentisate 1,2-dioxygenase of Burkholderia ambifaria (strain MC40-6).